We begin with the raw amino-acid sequence, 322 residues long: Ribonuclease Z (322 aa).

Positions 62, 64, 66, 67, 139, 210, and 268 each coordinate Zn(2+). The Proton acceptor role is filled by Asp66.

Belongs to the RNase Z family. Homodimer. Zn(2+) is required as a cofactor.

It carries out the reaction Endonucleolytic cleavage of RNA, removing extra 3' nucleotides from tRNA precursor, generating 3' termini of tRNAs. A 3'-hydroxy group is left at the tRNA terminus and a 5'-phosphoryl group is left at the trailer molecule.. Zinc phosphodiesterase, which displays some tRNA 3'-processing endonuclease activity. Probably involved in tRNA maturation, by removing a 3'-trailer from precursor tRNA. In Nostoc sp. (strain PCC 7120 / SAG 25.82 / UTEX 2576), this protein is Ribonuclease Z.